We begin with the raw amino-acid sequence, 593 residues long: Aspartate--tRNA(Asp/Asn) ligase (593 aa).

Residue glutamate 175 coordinates L-aspartate. An aspartate region spans residues 199–202 (QQYK). L-aspartate is bound by residues arginine 221 and histidine 452. 221–223 (RDE) contacts ATP. Glutamate 486 lines the ATP pocket. L-aspartate is bound at residue arginine 493. 538–541 (GVDR) lines the ATP pocket.

It belongs to the class-II aminoacyl-tRNA synthetase family. Type 1 subfamily. As to quaternary structure, homodimer.

The protein resides in the cytoplasm. It catalyses the reaction tRNA(Asx) + L-aspartate + ATP = L-aspartyl-tRNA(Asx) + AMP + diphosphate. In terms of biological role, aspartyl-tRNA synthetase with relaxed tRNA specificity since it is able to aspartylate not only its cognate tRNA(Asp) but also tRNA(Asn). Reaction proceeds in two steps: L-aspartate is first activated by ATP to form Asp-AMP and then transferred to the acceptor end of tRNA(Asp/Asn). In Novosphingobium aromaticivorans (strain ATCC 700278 / DSM 12444 / CCUG 56034 / CIP 105152 / NBRC 16084 / F199), this protein is Aspartate--tRNA(Asp/Asn) ligase.